A 409-amino-acid polypeptide reads, in one-letter code: Isovaleryl-CoA dehydrogenase, mitochondrial (409 aa).

The transit peptide at Met1–Phe22 directs the protein to the mitochondrion. FAD-binding positions include Leu151 to Ser160 and Trp184 to Thr186. Ser160 is a substrate binding site. Substrate-binding positions include Ser206–Lys207, Tyr261, and Asp268–Arg271. Glu270 functions as the Proton acceptor in the catalytic mechanism. FAD-binding positions include Arg296, Gln307, and Gln364 to Gly368. Ala391–Gly392 serves as a coordination point for substrate. Position 393-395 (Thr393–Glu395) interacts with FAD.

The protein belongs to the acyl-CoA dehydrogenase family. In terms of assembly, homodimer. Requires FAD as cofactor. Expressed in leaves, stems and flowers. Not detected in roots.

The protein localises to the mitochondrion. The enzyme catalyses 3-methylbutanoyl-CoA + oxidized [electron-transfer flavoprotein] + H(+) = 3-methylbut-2-enoyl-CoA + reduced [electron-transfer flavoprotein]. Its pathway is amino-acid degradation; L-leucine degradation; (S)-3-hydroxy-3-methylglutaryl-CoA from 3-isovaleryl-CoA: step 1/3. Functionally, involved in degradation of the branched-chain amino acids, phytol and lysine for the supply of carbon and electrons to the ETF/ETFQO complex during dark-induced sugar starvation. This chain is Isovaleryl-CoA dehydrogenase, mitochondrial (IVD), found in Arabidopsis thaliana (Mouse-ear cress).